Reading from the N-terminus, the 260-residue chain is Nuclear receptor subfamily 0 group B member 2 (260 aa).

An NR LBD domain is found at 16–260 (SHPTILYTLL…ELLEDMLLLR (245 aa)). R57 is modified (symmetric dimethylarginine; by PRMT5).

This sequence belongs to the nuclear hormone receptor family. NR0 subfamily. As to quaternary structure, heterodimer; efficient DNA binding requires dimerization with another bHLH protein. Interacts (via N-terminus) with NEUROD1 (via N-terminus and C-terminus). Interacts with ID2. Interacts with NR1I3 and EID1. Interacts with RARA, RXRA, THRB, NR5A1, NR5A2, PPARA and PPARG. Interacts with RORG, NFIL3, NR1D1 and BHLHE41. Interacts with HNF4A; the resulting heterodimer is transcriptionally inactive. Interacts with DDX3X; this interaction disrupts the interaction between HNF4 and NR0B2/SHP that forms inactive heterodimers and enhances the formation of active HNF4 homodimers. Arginine methylation by PRMT5 enhances repression activity of metabolic genes in liver in response to bile acid signaling, by increasing interaction with cofactors. As to expression, detected in kidney, testis, heart and liver.

It is found in the cytoplasm. It localises to the nucleus. Functionally, transcriptional regulator that acts as a negative regulator of receptor-dependent signaling pathways. Specifically inhibits transactivation of the nuclear receptor with which it interacts. Inhibits transcriptional activity of NEUROD1 on E-box-containing promoter by interfering with the coactivation function of the p300/CBP-mediated transcription complex for NEUROD1. Essential component of the liver circadian clock which via its interaction with NR1D1 and RORG regulates NPAS2-mediated hepatic lipid metabolism. Regulates the circadian expression of cytochrome P450 (CYP) enzymes. Represses: NR5A2 and HNF4A to down-regulate CYP2C38, NFLI3 to up-regulate CYP2A5, BHLHE41/HNF1A axis to up-regulate CYP1A2, CYP2E1 and CYP3A11, and NR1D1 to up-regulate CYP2B10, CYP4A10 and CYP4A14. The polypeptide is Nuclear receptor subfamily 0 group B member 2 (Nr0b2) (Rattus norvegicus (Rat)).